A 1060-amino-acid polypeptide reads, in one-letter code: Bumetanide-sensitive sodium-(potassium)-chloride cotransporter (1060 aa).

Residues 1-122 (MNDENRFNVS…KSPTPAVGIK (122 aa)) lie on the Cytoplasmic side of the membrane. The next 2 membrane-spanning stretches (helical) occupy residues 123–143 (LGWI…VMLF) and 154–174 (GIGL…ITTL). The Cytoplasmic segment spans residues 175 to 197 (SMSAICTNGEVKGGGIYYIISRS). A run of 2 helical transmembrane segments spans residues 198–218 (LGPE…AVAA) and 250–270 (IVGT…MDWE). Topologically, residues 271-275 (SKAQN) are cytoplasmic. The next 2 helical transmembrane spans lie at 276–296 (FLIA…IMGP) and 332–352 (FFSV…GANI). The Cytoplasmic segment spans residues 353 to 367 (SGDLKDPASAIPKGT). Residues 368–388 (LLALLISMVSYTLMVLFAGGG) form a helical membrane-spanning segment. 3 N-linked (GlcNAc...) asparagine glycosylation sites follow: N396, N404, and N419. The chain crosses the membrane as a helical span at residues 432-452 (VMQLMSAWGPFIYGGCWAATL). Residues 453 to 497 (STALTNLLSVPRLIQALGVDRIYPGLIFFSKPYGRHGEPYRGYVL) are Cytoplasmic-facing. Transmembrane regions (helical) follow at residues 498 to 518 (TFFV…APLI) and 563 to 583 (CVAI…AIFF). Residues 584 to 642 (TLYLIVHYRRPDVNWGSSTQAQMYKTALSSAHALARTGEHVKNYWPQLLVLAGRPQARP) are Cytoplasmic-facing. A helical transmembrane segment spans residues 643–663 (ALVDLGNLISKAGSLMIVGDI). N-linked (GlcNAc...) asparagine glycosylation occurs at N816. Residues 882–902 (TLDVWWLYDDGGLTILLPYII) traverse the membrane as a helical segment. Residues 903 to 1060 (SQRSAWANCK…NHTSVLTFYS (158 aa)) lie on the Cytoplasmic side of the membrane.

Belongs to the SLC12A transporter family.

The protein resides in the membrane. Functionally, electrically silent transporter system. Mediates sodium and chloride reabsorption. Plays a vital role in the regulation of ionic balance and cell volume. The chain is Bumetanide-sensitive sodium-(potassium)-chloride cotransporter from Manduca sexta (Tobacco hawkmoth).